Here is a 170-residue protein sequence, read N- to C-terminus: Adenine phosphoribosyltransferase (170 aa).

The protein belongs to the purine/pyrimidine phosphoribosyltransferase family. In terms of assembly, homodimer.

It is found in the cytoplasm. It catalyses the reaction AMP + diphosphate = 5-phospho-alpha-D-ribose 1-diphosphate + adenine. It functions in the pathway purine metabolism; AMP biosynthesis via salvage pathway; AMP from adenine: step 1/1. Its function is as follows. Catalyzes a salvage reaction resulting in the formation of AMP, that is energically less costly than de novo synthesis. The protein is Adenine phosphoribosyltransferase of Bacillus cereus (strain G9842).